We begin with the raw amino-acid sequence, 120 residues long: NAD(P)H-quinone oxidoreductase subunit 3, chloroplastic (120 aa).

A run of 3 helical transmembrane segments spans residues 10 to 30 (FWFF…TSKL), 64 to 84 (MFAL…PWAM), and 89 to 109 (LGVY…IGLV).

The protein belongs to the complex I subunit 3 family. As to quaternary structure, NDH is composed of at least 16 different subunits, 5 of which are encoded in the nucleus.

It is found in the plastid. It localises to the chloroplast thylakoid membrane. It catalyses the reaction a plastoquinone + NADH + (n+1) H(+)(in) = a plastoquinol + NAD(+) + n H(+)(out). It carries out the reaction a plastoquinone + NADPH + (n+1) H(+)(in) = a plastoquinol + NADP(+) + n H(+)(out). Its function is as follows. NDH shuttles electrons from NAD(P)H:plastoquinone, via FMN and iron-sulfur (Fe-S) centers, to quinones in the photosynthetic chain and possibly in a chloroplast respiratory chain. The immediate electron acceptor for the enzyme in this species is believed to be plastoquinone. Couples the redox reaction to proton translocation, and thus conserves the redox energy in a proton gradient. This is NAD(P)H-quinone oxidoreductase subunit 3, chloroplastic from Chaetosphaeridium globosum (Charophycean green alga).